An 817-amino-acid polypeptide reads, in one-letter code: Neurabin-2 (817 aa).

2 disordered regions span residues 1–52 (MMKT…KYGS) and 64–163 (MGTT…GGDK). Actin-binding stretches follow at residues 1–154 (MMKT…FERS) and 164–282 (EAVA…QHRV). Serine 15 is subject to Phosphoserine; by MAPK1. Serine 17 carries the post-translational modification Phosphoserine; by CDK5. Serine 94 carries the phosphoserine; by PKA modification. A phosphoserine mark is found at serine 100 and serine 116. Positions 100 to 371 (SLNENVDHSA…LERGVDNGRA (272 aa)) are interaction with D(2) dopamine receptor. Over residues 131-141 (SAQPAPPPHPP) the composition is skewed to pro residues. Positions 169 to 255 (RLLRQERAGL…KRSRVFQPPP (87 aa)) are interaction with ADRA2A, ADRA2B and ADRA2C. Serine 192 carries the post-translational modification Phosphoserine. A Phosphothreonine modification is found at threonine 193. Residue serine 205 is modified to Phosphoserine; by MAPK1. Threonine 207 bears the Phosphothreonine mark. Residues 216–451 (EKADSRTGLH…DPAPSRKIHF (236 aa)) are disordered. Residues 290–301 (KPREVRKIKPVE) are compositionally biased toward basic and acidic residues. Low complexity-rich tracts occupy residues 332–341 (STPATTASPA) and 399–409 (SGLGEDSGGSA). The segment covering 410–425 (LEEDDEEDEEDGEPPY) has biased composition (acidic residues). An interaction with protein phosphatase 1 region spans residues 417-494 (DEEDGEPPYE…LEKRVERLEL (78 aa)). Residue serine 438 is modified to Phosphoserine. A PP1-binding motif motif is present at residues 447–451 (RKIHF). Residues 480 to 525 (SAEYELEKRVERLELFPVELEKDSEGLGISIIGMGAGADMGLEKLG) form an interaction with RGS2 region. Positions 496–584 (PVELEKDSEG…RVRFMIGRER (89 aa)) constitute a PDZ domain. Positions 595–616 (IQQTLEQERWQREMMEQRYAQY) form a coiled coil. Residues 595–816 (IQQTLEQERW…NLQTLRNSNS (222 aa)) are interaction with TGN38. Serine 658 bears the Phosphoserine mark. Positions 665–816 (EKLVHKFKEL…NLQTLRNSNS (152 aa)) form a coiled coil.

In terms of assembly, possibly exists as a homodimer, homotrimer or a homotetramer. Interacts with F-actin, PPP1CA, neurabin-1, TGN38 and D(2) dopamine receptor. Interacts with RGS1, RGS2, RGS4, RGS19 and ADRA1B, ADRA2A, ADRA2B, ADRA2C, CDKN2A, PPP1R2, RASGFR1 and TIAM1. Interacts (via C-terminus) with SPATA13 (via C-terminal tail). Interacts with DCLK2. Interacts with ADRA2B. In terms of processing, stimulation of D1 (but not D2) dopamine receptors induces Ser-94 phosphorylation. Dephosphorylation of Ser-94 is mediated mainly by PP1 and to a lesser extent by PP2A. Phosphorylation of spinophilin disrupts its association with F-actin, but does not affect its binding to PP1.

It localises to the cytoplasm. The protein localises to the cytoskeleton. The protein resides in the nucleus. Its subcellular location is the postsynaptic density. It is found in the cell junction. It localises to the adherens junction. The protein localises to the cell projection. The protein resides in the dendritic spine. Its subcellular location is the cell membrane. It is found in the lamellipodium. It localises to the filopodium. The protein localises to the ruffle membrane. Seems to act as a scaffold protein in multiple signaling pathways. Modulates excitatory synaptic transmission and dendritic spine morphology. Binds to actin filaments (F-actin) and shows cross-linking activity. Binds along the sides of the F-actin. May play an important role in linking the actin cytoskeleton to the plasma membrane at the synaptic junction. Believed to target protein phosphatase 1/PP1 to dendritic spines, which are rich in F-actin, and regulates its specificity toward ion channels and other substrates, such as AMPA-type and NMDA-type glutamate receptors. Plays a role in regulation of G-protein coupled receptor signaling, including dopamine D2 receptors and alpha-adrenergic receptors. May establish a signaling complex for dopaminergic neurotransmission through D2 receptors by linking receptors downstream signaling molecules and the actin cytoskeleton. Binds to ADRA1B and RGS2 and mediates regulation of ADRA1B signaling. May confer to Rac signaling specificity by binding to both, RacGEFs and Rac effector proteins. Probably regulates p70 S6 kinase activity by forming a complex with TIAM1. Required for hepatocyte growth factor (HGF)-induced cell migration. In Mus musculus (Mouse), this protein is Neurabin-2 (Ppp1r9b).